An 813-amino-acid chain; its full sequence is UPF0508 protein KLLA0A06237g (813 aa).

The segment at Lys478–Lys537 is disordered. Residues Ser506 to Lys537 show a composition bias toward low complexity.

Belongs to the UPF0508 family.

This is UPF0508 protein KLLA0A06237g from Kluyveromyces lactis (strain ATCC 8585 / CBS 2359 / DSM 70799 / NBRC 1267 / NRRL Y-1140 / WM37) (Yeast).